Consider the following 656-residue polypeptide: MQLRHINIRALIAEAGGDPWAIEHSLHAGRPAQIAELAEAFHAAGRYTAEANAAFEEARRRFEASWNRENGEHPINDSAEVQRVTAALGVQSLQLPKIGVDLENIAADLAEAQRAAAGRIATLESQLQRIDDQLDQALELEHDPRLAAAERSELDALITCLEQDAIDDTASALGQLQSIRAGYSDHLQQSLAMLRADGYDGAGLQGLDAPQSPVKPEEPIQIPPPGTGAPEVHRWWTSLTSEERQRLIAEHPEQIGNLNGVPVSARSDANIAVMTRDLNRVRDIATRYRTSVDDVLGDPAKYGLSAGDITRYRNADETKKGLDHNARNDPRNPSPVYLFAYDPMAFGGKGRAAIAIGNPDTAKHTAVIVPGTSSSVKGGWLHDNHDDALNLFNQAKAADPNNPTAVIAWMGYDAPNDFTDPRIATPMLARIGGAALAEDVNGLWVTHLGVGQNVTVLGHSYGSTTVADAFALGGMHANDAVLLGCPGTDLAHSAASFHLDGGRVYVGAASTDPISMLGQLDSLSQYVNRGNLAGQLQGLAVGLGTDPAGDGFGSVRFRAEVPNSDGINPHDHSYYYHRGSEALRSMADIASGHGDALASDGMLAQPRHQPGVEIDIPGLGSVEIDIPGTPASIDPEWSRPPGSITDDHVFDAPLHR.

The disordered stretch occupies residues 623 to 656; it reads EIDIPGTPASIDPEWSRPPGSITDDHVFDAPLHR. Basic and acidic residues predominate over residues 645 to 656; sequence TDDHVFDAPLHR.

This is an uncharacterized protein from Mycobacterium tuberculosis (strain ATCC 25618 / H37Rv).